The chain runs to 763 residues: Phosphoglycerol transferase I (763 aa).

The next 4 membrane-spanning stretches (helical) occupy residues 4–19 (LLSV…IYAW), 26–48 (WWFA…LYAS), 76–98 (YILP…GWVL), and 110–132 (YSLL…RQIT).

It belongs to the OpgB family.

It is found in the cell inner membrane. It carries out the reaction a phosphatidylglycerol + a membrane-derived-oligosaccharide D-glucose = a 1,2-diacyl-sn-glycerol + a membrane-derived-oligosaccharide 6-(glycerophospho)-D-glucose.. The protein operates within glycan metabolism; osmoregulated periplasmic glucan (OPG) biosynthesis. Transfers a phosphoglycerol residue from phosphatidylglycerol to the membrane-bound nascent glucan backbones. The sequence is that of Phosphoglycerol transferase I from Salmonella typhi.